A 318-amino-acid polypeptide reads, in one-letter code: uncharacterized protein (318 aa).

A coiled-coil region spans residues 67-157 (LAFDELEKEK…SLKAIQTSQE (91 aa)). A disordered region spans residues 172–318 (ESTNKVEKNA…KGFFARLFNL (147 aa)). Composition is skewed to basic and acidic residues over residues 175-193 (NKVEKNAVTEDKADSKDSK) and 219-236 (KVDKEDQISATEAIEKAS). Positions 237–248 (VEQSKNENAAET) are enriched in polar residues. 2 stretches are compositionally biased toward basic and acidic residues: residues 249 to 274 (SNKEATVDADAQHDAEQQVAEAHAEA) and 300 to 310 (SEPKPQEEKKG).

This is an uncharacterized protein from Staphylococcus aureus (strain Mu50 / ATCC 700699).